The chain runs to 318 residues: MKAVIAVFITLMLTAVVAFQPAASFSAPKCAGKMSMAIEDAPKKAAAAALAALTTLSVISPSFAITKEELRSLDYLQVKGTGLANRCPEVKGTDSIKVKGAGQEIVDLCIEPKTFQVLEETRNKKGELSKEFINTKLMTRQTYTLDGISGDLNVVDGKIQFTELDGIDYAATTVQKPGGERVPFLFTVKELVAKASAGGNTIAPGFQMGGKFVVPSYRTGLFLDPKGRGATTGYDMAVALPGIQSGVEGDEELFRENNKVFDVLSGQIEFEVNRVNLEEGEIGGVFVSTQGSDTDMGSKSPETVLLKGIFYGRIADKE.

The first 18 residues, 1 to 18, serve as a signal peptide directing secretion; that stretch reads MKAVIAVFITLMLTAVVA. The chain crosses the membrane as a helical span at residues 45–65; the sequence is AAAAALAALTTLSVISPSFAI.

The protein belongs to the PsbO family.

It localises to the plastid. Its subcellular location is the chloroplast thylakoid membrane. Its function is as follows. Stabilizes the manganese cluster which is the primary site of water splitting. This Chattonella marina var. antiqua (Red tide flagellate) protein is Oxygen-evolving enhancer protein 1, chloroplastic.